The following is a 711-amino-acid chain: Exotoxin translocation ATP-binding protein PaxB (711 aa).

The 129-residue stretch at Met-1–Leu-129 folds into the Peptidase C39 domain. The next 5 helical transmembrane spans lie at Ile-157 to Leu-177, Leu-195 to Leu-215, Ala-273 to Tyr-293, Ile-299 to Leu-319, and Val-392 to Gly-412. One can recognise an ABC transmembrane type-1 domain in the interval Phe-158–Gln-440. The region spanning Val-472–Gln-707 is the ABC transporter domain. An ATP-binding site is contributed by Gly-506–Ser-513.

Belongs to the ABC transporter superfamily. Protein-1 exporter (TC 3.A.1.109) family. Homodimer.

It localises to the cell inner membrane. It carries out the reaction ATP + H2O + proteinSide 1 = ADP + phosphate + proteinSide 2.. In terms of biological role, part of the ABC transporter complex PaxBD involved in PaxA export. Transmembrane domains (TMD) form a pore in the inner membrane and the ATP-binding domain (NBD) is responsible for energy generation. This chain is Exotoxin translocation ATP-binding protein PaxB (paxB), found in Pasteurella aerogenes.